A 299-amino-acid chain; its full sequence is GTPase Era (299 aa).

An Era-type G domain is found at 5 to 172 (KSGFVSIIGR…IDVLKSFLPE (168 aa)). The G1 stretch occupies residues 13–20 (GRPNVGKS). 13-20 (GRPNVGKS) is a binding site for GTP. The interval 39 to 43 (QTTRN) is G2. The interval 60 to 63 (DTPG) is G3. Residues 60–64 (DTPGI) and 122–125 (NKID) each bind GTP. Residues 122–125 (NKID) are G4. Residues 151-153 (ISA) are G5. In terms of domain architecture, KH type-2 spans 203–280 (TSEEIPHAIG…YLELWVKVQR (78 aa)).

This sequence belongs to the TRAFAC class TrmE-Era-EngA-EngB-Septin-like GTPase superfamily. Era GTPase family. As to quaternary structure, monomer.

The protein resides in the cytoplasm. The protein localises to the cell membrane. In terms of biological role, an essential GTPase that binds both GDP and GTP, with rapid nucleotide exchange. Plays a role in 16S rRNA processing and 30S ribosomal subunit biogenesis and possibly also in cell cycle regulation and energy metabolism. The polypeptide is GTPase Era (Staphylococcus epidermidis (strain ATCC 12228 / FDA PCI 1200)).